Here is a 427-residue protein sequence, read N- to C-terminus: Ectoine TRAP transporter large permease protein TeaC (427 aa).

12 consecutive transmembrane segments (helical) span residues 13–35 (LLLG…FMMF), 49–69 (MAGI…AADI), 79–99 (LINM…VSTA), 103–123 (TLFG…GSPL), 147–167 (IAFL…SGTS), 172–192 (FIAG…YCVI), 216–236 (LALW…GGIF), 237–257 (SPTE…FVVF), 273–293 (GLIT…SWII), 320–340 (ICVA…ILVL), 356–376 (VLVG…PPFG), and 400–420 (FIFM…IALF).

This sequence belongs to the TRAP transporter large permease family. As to quaternary structure, the complex comprises the extracytoplasmic solute receptor protein TeaA, and the two transmembrane proteins TeaB and TeaC.

It is found in the cell inner membrane. Part of the tripartite ATP-independent periplasmic (TRAP) transport system TeaABC involved in the uptake of ectoine and hydroxyectoine in response to osmotic upshock. Probably functions as a recovery system for synthesized ectoine that leaks out of the cell. In Halomonas elongata (strain ATCC 33173 / DSM 2581 / NBRC 15536 / NCIMB 2198 / 1H9), this protein is Ectoine TRAP transporter large permease protein TeaC (teaC).